We begin with the raw amino-acid sequence, 389 residues long: Glutamate 5-kinase (389 aa).

Residue K17 participates in ATP binding. Residues S57, D144, and N156 each coordinate substrate. 176 to 177 lines the ATP pocket; it reads SD. Residues 282-359 form the PUA domain; that stretch reads AGEIHVDAGA…NEIETILGYV (78 aa).

This sequence belongs to the glutamate 5-kinase family.

It localises to the cytoplasm. The catalysed reaction is L-glutamate + ATP = L-glutamyl 5-phosphate + ADP. It participates in amino-acid biosynthesis; L-proline biosynthesis; L-glutamate 5-semialdehyde from L-glutamate: step 1/2. Functionally, catalyzes the transfer of a phosphate group to glutamate to form L-glutamate 5-phosphate. This Agrobacterium fabrum (strain C58 / ATCC 33970) (Agrobacterium tumefaciens (strain C58)) protein is Glutamate 5-kinase.